Reading from the N-terminus, the 550-residue chain is Transcription factor p65 (550 aa).

At Met-1 the chain carries N-acetylmethionine. The 175-residue stretch at 16 to 190 folds into the RHD domain; that stretch reads ASGPYVEIIE…HPIFDNRAPN (175 aa). Lys-37 participates in a covalent cross-link: Glycyl lysine isopeptide (Lys-Gly) (interchain with G-Cter in SUMO3). Cys-38 is subject to Cysteine persulfide; alternate. Position 38 is an S-nitrosocysteine; alternate (Cys-38). 4 positions are modified to N6-acetyllysine: Lys-122, Lys-123, Lys-218, and Lys-221. Residues Lys-122 and Lys-123 each participate in a glycyl lysine isopeptide (Lys-Gly) (interchain with G-Cter in SUMO3); alternate cross-link. Residue Thr-254 is modified to Phosphothreonine. Phosphoserine occurs at positions 276 and 281. The Nuclear localization signal signature appears at 301-304; sequence KRKR. Residue Lys-310 is modified to N6-acetyllysine; alternate. Lys-310 is subject to N6-methyllysine. Residue Ser-311 is modified to Phosphoserine. Transcriptional activation domain stretches follow at residues 342–388 and 414–476; these read PKPA…APVL and PGPP…EFQQ. Thr-434 is modified (phosphothreonine). Ser-468 carries the phosphoserine modification. The residue at position 505 (Thr-505) is a Phosphothreonine. The transcriptional activation domain 2 stretch occupies residues 520–550; that stretch reads TSGLPNGLSGDEDFSSIADMDFSALLSQISS. The residue at position 535 (Ser-535) is a Phosphoserine. Residues 535–543 carry the 9aaTAD motif; that stretch reads SIADMDFSA.

In terms of assembly, component of the NF-kappa-B p65-p50 complex. Component of the NF-kappa-B p65-c-Rel complex. Homodimer; component of the NF-kappa-B p65-p65 complex. Component of the NF-kappa-B p65-p52 complex. May interact with ETHE1. Binds TLE5 and TLE1. Interacts with TP53BP2. Binds to and is phosphorylated by the activated form of either RPS6KA4 or RPS6KA5. Interacts with ING4 and this interaction may be indirect. Interacts with CARM1, USP48 and UNC5CL. Interacts with IRAK1BP1. Interacts with NFKBID. Interacts with NFKBIA. Interacts with GSK3B. Interacts with NFKBIB. Interacts with NFKBIE. Interacts with NFKBIZ. Interacts with EHMT1 (via ANK repeats). Part of a 70-90 kDa complex at least consisting of CHUK, IKBKB, NFKBIA, RELA, ELP1 and MAP3K14. Interacts with HDAC3; HDAC3 mediates the deacetylation of RELA. Interacts with HDAC1; the interaction requires non-phosphorylated RELA. Interacts with CBP; the interaction requires phosphorylated RELA. Interacts (phosphorylated at 'Thr-254') with PIN1; the interaction inhibits p65 binding to NFKBIA. Interacts with SOCS1. Interacts with UXT. Interacts with MTDH and PHF11. Interacts with ARRB2. Interacts with NFKBIA (when phosphorylated), the interaction is direct; phosphorylated NFKBIA is part of a SCF(BTRC)-like complex lacking CUL1. Interacts with RNF25. Interacts (via C-terminus) with DDX1. Interacts with UFL1 and COMMD1. Interacts with BRMS1; this promotes deacetylation of 'Lys-310'. Interacts with NOTCH2. Directly interacts with MEN1; this interaction represses NFKB-mediated transactivation. Interacts with AKIP1, which promotes the phosphorylation and nuclear retention of RELA. Interacts (via the RHD) with GFI1; the interaction, after bacterial lipopolysaccharide (LPS) stimulation, inhibits the transcriptional activity by interfering with the DNA-binding activity to target gene promoter DNA. Interacts (when acetylated at Lys-310) with BRD4; leading to activation of the NF-kappa-B pathway. Interacts with MEFV. Interacts with CLOCK. Interacts (via N-terminus) with CPEN1; this interaction induces proteolytic cleavage of p65/RELA subunit and inhibition of NF-kappa-B transcriptional activity. Interacts with FOXP3. Interacts with CDK5RAP3; stimulates the interaction of RELA with HDAC1, HDAC2 and HDAC3 thereby inhibiting NF-kappa-B transcriptional activity. Interacts with DHX9; this interaction is direct and activates NF-kappa-B-mediated transcription. Interacts with LRRC25. Interacts with TBX21. Interacts with KAT2A. Interacts with ZBTB7A; involved in the control by RELA of the accessibility of target gene promoters. Directly interacts with DDX3X; this interaction may trap RELA in the cytoplasm, impairing nuclear relocalization upon TNF activating signals. Interacts with PHF2. Interacts with MKRN2; the interaction leads to its polyubiquitination and proteasome-dependent degradation. Interacts with ECSIT. Interacts with RAB28; the interaction contributes to RELA transport from cytoplasm to nucleus. Post-translationally, ubiquitinated by RNF182, leading to its proteasomal degradation. Degradation is required for termination of NF-kappa-B response. Polyubiquitinated via 'Lys-29'-linked ubiquitin; leading to lysosomal degradation. Monomethylated at Lys-310 by SETD6. Monomethylation at Lys-310 is recognized by the ANK repeats of EHMT1 and promotes the formation of repressed chromatin at target genes, leading to down-regulation of NF-kappa-B transcription factor activity. Phosphorylation at Ser-311 disrupts the interaction with EHMT1 without preventing monomethylation at Lys-310 and relieves the repression of target genes. In terms of processing, phosphorylation at Ser-311 disrupts the interaction with EHMT1 and promotes transcription factor activity. Phosphorylation on Ser-535 stimulates acetylation on Lys-310 and interaction with CBP; the phosphorylated and acetylated forms show enhanced transcriptional activity. Phosphorylation at Ser-276 by RPS6KA4 and RPS6KA5 promotes its transactivation and transcriptional activities. Post-translationally, phosphorylation at Ser-75 by herpes simplex virus 1/HHV-1 inhibits NF-kappa-B activation. Reversibly acetylated; the acetylation seems to be mediated by CBP, the deacetylation by HDAC3 and SIRT2. Acetylation at Lys-122 enhances DNA binding and impairs association with NFKBIA. Acetylation at Lys-310 is required for full transcriptional activity in the absence of effects on DNA binding and NFKBIA association. Acetylation at Lys-310 promotes interaction with BRD4. Acetylation can also lower DNA-binding and results in nuclear export. Interaction with BRMS1 promotes deacetylation of Lys-310. Lys-310 is deacetylated by SIRT2. In terms of processing, S-nitrosylation of Cys-38 inactivates the enzyme activity. Post-translationally, sulfhydration at Cys-38 mediates the anti-apoptotic activity by promoting the interaction with RPS3 and activating the transcription factor activity. Sumoylation by PIAS3 negatively regulates DNA-bound activated NF-kappa-B. In terms of processing, proteolytically cleaved within a conserved N-terminus region required for base-specific contact with DNA in a CPEN1-mediated manner, and hence inhibits NF-kappa-B transcriptional activity.

It localises to the nucleus. Its subcellular location is the cytoplasm. Functionally, NF-kappa-B is a pleiotropic transcription factor present in almost all cell types and is the endpoint of a series of signal transduction events that are initiated by a vast array of stimuli related to many biological processes such as inflammation, immunity, differentiation, cell growth, tumorigenesis and apoptosis. NF-kappa-B is a homo- or heterodimeric complex formed by the Rel-like domain-containing proteins RELA/p65, RELB, NFKB1/p105, NFKB1/p50, REL and NFKB2/p52. The heterodimeric RELA-NFKB1 complex appears to be most abundant one. The dimers bind at kappa-B sites in the DNA of their target genes and the individual dimers have distinct preferences for different kappa-B sites that they can bind with distinguishable affinity and specificity. Different dimer combinations act as transcriptional activators or repressors, respectively. The NF-kappa-B heterodimeric RELA-NFKB1 and RELA-REL complexes, for instance, function as transcriptional activators. NF-kappa-B is controlled by various mechanisms of post-translational modification and subcellular compartmentalization as well as by interactions with other cofactors or corepressors. NF-kappa-B complexes are held in the cytoplasm in an inactive state complexed with members of the NF-kappa-B inhibitor (I-kappa-B) family. In a conventional activation pathway, I-kappa-B is phosphorylated by I-kappa-B kinases (IKKs) in response to different activators, subsequently degraded thus liberating the active NF-kappa-B complex which translocates to the nucleus. The inhibitory effect of I-kappa-B on NF-kappa-B through retention in the cytoplasm is exerted primarily through the interaction with RELA. RELA shows a weak DNA-binding site which could contribute directly to DNA binding in the NF-kappa-B complex. Besides its activity as a direct transcriptional activator, it is also able to modulate promoters accessibility to transcription factors and thereby indirectly regulate gene expression. Associates with chromatin at the NF-kappa-B promoter region via association with DDX1. Essential for cytokine gene expression in T-cells. The NF-kappa-B homodimeric RELA-RELA complex appears to be involved in invasin-mediated activation of IL-8 expression. Key transcription factor regulating the IFN response during SARS-CoV-2 infection. This chain is Transcription factor p65, found in Rattus norvegicus (Rat).